Consider the following 467-residue polypeptide: MNSSPPPANSANGDTTNNGENGQDLNLNFLDKIRLSAKRDAKEDEGEELPTELNTINSAGGFLVVSPDKLSVKYTNTNLHGHDVGVVQANKPAPIKCLTYYFEIFVKDSGIKGQIAIGFTKESFKMRRQPGWEVNSCGYHGDDGYLYRGQGKGEPFGPKFTKDDAVGGGINYASQEFFFTKNGTIVGKIPKDIRGHLFPTVAVHSQNEEVLVNFGKKKFAFDIKGYEASERNKQQLAIEKISIPPNIGYGLVKTYLLHYGYEETLDAFNLATKNTVPPIHIDQENAIDEDDSSYALKQRKNLRQLVRNGEIDTALAELQKLYPQIVQDDKSVVCFLLHCQKFIELVRVGKLEEGVNYGRLELAKFVGLTGFQDIVEDCFALLAYEKPEESSVWYFLEDSQRELVADAVNAAILSTNPNKKDVQRSCHLQSHLEKLLRQLTVCCLERRSLNGDQGETFRLRHVLNNNR.

The segment at M1–L25 is disordered. Residues N9–L25 show a composition bias toward polar residues. In terms of domain architecture, B30.2/SPRY spans D31–F219. The 33-residue stretch at P244–V276 folds into the LisH domain. One can recognise a CTLH domain in the interval A295–E353.

Belongs to the RANBP9/10 family. Interacts with WDR36, WDS, GID8, MAEA and RMD5.

The protein resides in the cytoplasm. Its subcellular location is the nucleus. It is found in the perinuclear region. This is Ran-binding protein M homolog from Arabidopsis thaliana (Mouse-ear cress).